Reading from the N-terminus, the 312-residue chain is Ribosomal RNA small subunit methyltransferase H (312 aa).

Residues 37–39, Asp57, Phe83, and Asp104 each bind S-adenosyl-L-methionine; that span reads GGH.

Belongs to the methyltransferase superfamily. RsmH family.

It is found in the cytoplasm. The enzyme catalyses cytidine(1402) in 16S rRNA + S-adenosyl-L-methionine = N(4)-methylcytidine(1402) in 16S rRNA + S-adenosyl-L-homocysteine + H(+). Functionally, specifically methylates the N4 position of cytidine in position 1402 (C1402) of 16S rRNA. This Malacoplasma penetrans (strain HF-2) (Mycoplasma penetrans) protein is Ribosomal RNA small subunit methyltransferase H.